The chain runs to 236 residues: Carbonyl reductase family member 4 (236 aa).

NADP(+) is bound by residues 11–14 (SRGI), 34–35 (RN), Asp55, and 82–84 (SAG). Substrate is bound at residue Ser134. Residues Tyr147, Lys151, and 180-182 (IRT) each bind NADP(+). The active-site Proton acceptor is the Tyr147.

Belongs to the short-chain dehydrogenases/reductases (SDR) family. In terms of assembly, homotetramer (in vitro). Heterotetramer with HSD17B8; contains two molecules each of HSD17B8 and CBR4.

The protein localises to the mitochondrion matrix. The protein operates within lipid metabolism; fatty acid biosynthesis. Its function is as follows. The heterotetramer with HSD17B8 has NADH-dependent 3-ketoacyl-acyl carrier protein reductase activity, and thereby plays a role in mitochondrial fatty acid biosynthesis. Within the heterotetramer, HSD17B8 binds NADH; CBR4 binds NADPD. The homotetramer has NADPH-dependent quinone reductase activity. Both homotetramer and the heterotetramer have broad in vitro substrate specificity and can reduce 9,10-phenanthrenequinone, 1,4-benzoquinone and various other o-quinones and p-quinones. This is Carbonyl reductase family member 4 (cbr4) from Xenopus laevis (African clawed frog).